A 400-amino-acid chain; its full sequence is Zinc finger CCHC domain-containing protein 3 (400 aa).

A disordered region spans residues 1–157; sequence MATGGGAEEE…LQDEPPAAGP (157 aa). 2 stretches are compositionally biased toward basic and acidic residues: residues 26–38 and 47–63; these read ARVEEPEGVREKM and LAEKKGDFREPRRRDET. A compositionally biased stretch (gly residues) spans 66–75; it reads GASGGLGSPG. Residues 91-109 show a composition bias toward basic and acidic residues; it reads GDPKGRRRDPTGEASDAYR. Position 198 is a phosphotyrosine (tyrosine 198). 2 consecutive CCHC-type zinc fingers follow at residues 349–365 and 369–384; these read RCFRCGEEGHLSPYCRK and CNLCGKRGHAFAQCPK.

Interacts with CGAS. Interacts with RIGI. Interacts with IFIH1/MDA5.

It is found in the cytoplasm. Its function is as follows. Nucleic acid-binding protein involved in innate immune response to DNA and RNA viruses. Binds DNA and RNA in the cytoplasm and acts by promoting recognition of viral nucleic acids by virus sensors, such as RIGI, IFIH1/MDA5 and CGAS. Acts as a co-sensor for recognition of double-stranded DNA (dsDNA) by cGAS in the cytoplasm, thereby playing a role in innate immune response to cytosolic dsDNA and DNA virus. Binds dsDNA and probably acts by promoting sensing of dsDNA by CGAS, leading to enhance CGAS oligomerization and activation. Promotes sensing of viral RNA by RIG-I-like receptors proteins RIGI and IFIH1/MDA5 via two mechanisms: binds double-stranded RNA (dsRNA), enhancing the binding of RIGI and IFIH1/MDA5 to dsRNA and promotes 'Lys-63'-linked ubiquitination and subsequent activation of RIGI and IFIH1/MDA5. In Mus musculus (Mouse), this protein is Zinc finger CCHC domain-containing protein 3.